A 134-amino-acid chain; its full sequence is Orexigenic neuropeptide QRFP (134 aa).

A signal peptide spans 1–18; sequence MRSPYSLPYLLFLPLGAC. The propeptide occupies 19-88; it reads FPVLDTEEPV…RAGFQLRLGR (70 aa). Phenylalanine amide is present on Phe-131.

Belongs to the RFamide neuropeptide family. As to quaternary structure, ligand for the G-protein coupled receptor QRFPR/GPR103. As to expression, expressed in the hypothalamus.

The protein localises to the secreted. Stimulates feeding behavior, metabolic rate and locomotor activity and increases blood pressure. May have orexigenic activity. May promote aldosterone secretion by the adrenal gland. The chain is Orexigenic neuropeptide QRFP from Bos taurus (Bovine).